A 303-amino-acid chain; its full sequence is Aquaporin NIP1-2 (303 aa).

A disordered region spans residues 1–39 (MAGREDGAAAGAMEEGQDSKEVKCESSEDGSSSSSSSRC). Positions 17–26 (QDSKEVKCES) are enriched in basic and acidic residues. 2 helical membrane-spanning segments follow: residues 66–86 (ILAE…AVVV) and 91–111 (GGAV…MVLV). The NPA 1 motif lies at 123–125 (NPA). A run of 3 helical transmembrane segments spans residues 145–165 (VVAQ…VFGG), 188–208 (AAAL…GVAT), and 212–232 (AIGE…VLFA). The short motif at 241–243 (NPA) is the NPA 2 element. A helical membrane pass occupies residues 255-275 (YGGVWVYVAAPVSGTVCGAWA).

The protein belongs to the MIP/aquaporin (TC 1.A.8) family. NIP (TC 1.A.8.12) subfamily. In terms of tissue distribution, expressed in roots and leaves, and at lower levels in anthers.

It localises to the membrane. Aquaporins facilitate the transport of water and small neutral solutes across cell membranes. This is Aquaporin NIP1-2 (NIP1-2) from Oryza sativa subsp. japonica (Rice).